Reading from the N-terminus, the 104-residue chain is Matrix Gla protein (104 aa).

A signal peptide spans 1–19; the sequence is MKSLLPLAILAALAVATLC. E21 carries the 4-carboxyglutamate modification. A phosphoserine mark is found at S22, S25, and S28. The Gla domain occupies 51–97; that stretch reads RAKAQKRVQERNKPAYEINREACDDYKLCERYAMVYGYNAAYNRYFR. E60, E67, and E71 each carry 4-carboxyglutamate. A disulfide bridge links C73 with C79.

This sequence belongs to the osteocalcin/matrix Gla protein family. In terms of processing, requires vitamin K-dependent gamma-carboxylation for its function.

It localises to the secreted. Functionally, associates with the organic matrix of bone and cartilage. Thought to act as an inhibitor of bone formation. The chain is Matrix Gla protein (Mgp) from Mus musculus (Mouse).